Here is a 117-residue protein sequence, read N- to C-terminus: MGSTAILALLLAVLQGVCAEVQLVQSGAEVKKPGESLKISCKGSGYSFTSYWIGWVRQMPGKGLEWMGIIYPGDSDTRYSPSFQGQVTISADKSISTAYLQWSSLKASDTAMYYCAR.

Positions methionine 1 to alanine 19 are cleaved as a signal peptide. The segment at glutamate 20 to serine 44 is framework-1. The 98-residue stretch at glutamate 20–arginine 117 folds into the Ig-like domain. A disulfide bridge connects residues cysteine 41 and cysteine 115. The interval glycine 45–tryptophan 52 is complementarity-determining-1. A framework-2 region spans residues isoleucine 53 to isoleucine 69. The tract at residues isoleucine 70–threonine 77 is complementarity-determining-2. The interval arginine 78–cysteine 115 is framework-3. A complementarity-determining-3 region spans residues alanine 116–arginine 117.

Immunoglobulins are composed of two identical heavy chains and two identical light chains; disulfide-linked.

The protein resides in the secreted. Its subcellular location is the cell membrane. V region of the variable domain of immunoglobulin heavy chains that participates in the antigen recognition. Immunoglobulins, also known as antibodies, are membrane-bound or secreted glycoproteins produced by B lymphocytes. In the recognition phase of humoral immunity, the membrane-bound immunoglobulins serve as receptors which, upon binding of a specific antigen, trigger the clonal expansion and differentiation of B lymphocytes into immunoglobulins-secreting plasma cells. Secreted immunoglobulins mediate the effector phase of humoral immunity, which results in the elimination of bound antigens. The antigen binding site is formed by the variable domain of one heavy chain, together with that of its associated light chain. Thus, each immunoglobulin has two antigen binding sites with remarkable affinity for a particular antigen. The variable domains are assembled by a process called V-(D)-J rearrangement and can then be subjected to somatic hypermutations which, after exposure to antigen and selection, allow affinity maturation for a particular antigen. The polypeptide is Immunoglobulin heavy variable 5-51 (Homo sapiens (Human)).